The primary structure comprises 193 residues: MDSLVLASSSEYRLRLLKQLMIVPGEVISPDLDESVHKGELPRLYAERVAREKALKVFSSRPDKFVLGADTVAYCGRRIMLKTDDEAQATEYLEMISGRRHRVCTAVCLCAPTGDVRVRSVVSVVKFKRLSKDEIDCYIRSGEWKGKAGGYSIQGWASALISWMQGSHSSIVGLPLHETYCLLSGYFKLTHIP.

Residue aspartate 70 is the Proton acceptor of the active site.

The protein belongs to the Maf family. A divalent metal cation serves as cofactor.

The protein resides in the cytoplasm. It catalyses the reaction a ribonucleoside 5'-triphosphate + H2O = a ribonucleoside 5'-phosphate + diphosphate + H(+). It carries out the reaction a 2'-deoxyribonucleoside 5'-triphosphate + H2O = a 2'-deoxyribonucleoside 5'-phosphate + diphosphate + H(+). Nucleoside triphosphate pyrophosphatase. May have a dual role in cell division arrest and in preventing the incorporation of modified nucleotides into cellular nucleic acids. This is Nucleoside triphosphate pyrophosphatase from Anaplasma phagocytophilum (strain HZ).